The following is a 137-amino-acid chain: TSC22 domain family protein 3 (137 aa).

Positions 1 to 60 (MNTEMYQTPMEVAVYQLHNFSISFFSSLLGGDVVSVKLDNSASGASVVALDNKIEQAMDL) are AP1-binding. Phosphoserine is present on residues Asn-40 and Val-73. Residues 76–97 (LKEQIRELLEKNSQLERENTLL) form a leucine-zipper region. The tract at residues 101-137 (ASPEQLEKFQSRLSPEEPAPEAPETPETPEAPGGSAV) is disordered. The residue at position 102 (Ser-102) is a Phosphoserine. Phosphothreonine occurs at positions 125 and 128. Over residues 128–137 (TPEAPGGSAV) the composition is skewed to low complexity.

This sequence belongs to the TSC-22/Dip/Bun family. Can form homodimers, however it is likely to function as a monomer. Interacts with NFKB1. Interacts (via N-terminus) with JUN and FOS; these interactions inhibit the binding of active AP1 to its target DNA. In terms of assembly, interacts with MYOD1. Interacts with HDAC1; this interaction affects HDAC1 activity on MYOG promoter and thus inhibits MYOD1 transcriptional activity. As to quaternary structure, interacts with MYOD1. In terms of tissue distribution, expressed in T-cells. Expression inversely correlates with T-cell activation, being higher in resting cells and lower in cells activated by TCR/CD3 triggering (at protein level). Constitutively expressed in lung, intestine, kidney and liver, most probably by resident cells from the macrophage lineage. Expressed in thymus, lymph nodes, bone marrow, spleen, lung and skeletal muscle. Expressed in spleen and skeletal muscle (at protein level). Expressed in the cortex, medulla and papilla of the kidney. As to expression, expressed in the cortex, medulla and papilla of the kidney. In terms of tissue distribution, expressed in spleen and skeletal muscle (at protein level).

Its subcellular location is the cytoplasm. The protein localises to the nucleus. Its function is as follows. Protects T-cells from IL2 deprivation-induced apoptosis through the inhibition of FOXO3A transcriptional activity that leads to the down-regulation of the pro-apoptotic factor BCL2L11. In macrophages, plays a role in the anti-inflammatory and immunosuppressive effects of glucocorticoids and IL10. In T-cells, inhibits anti-CD3-induced NFKB1 nuclear translocation and thereby NFKB1 DNA-binding activities. In vitro, suppresses AP-1 transcription factor complex DNA-binding activities. Inhibits myogenic differentiation and mediates anti-myogenic effects of glucocorticoids by binding and regulating MYOD1 and HDAC1 transcriptional activity resulting in reduced expression of MYOG. In Mus musculus (Mouse), this protein is TSC22 domain family protein 3.